Consider the following 75-residue polypeptide: Small ribosomal subunit protein bS18 (75 aa).

Belongs to the bacterial ribosomal protein bS18 family. Part of the 30S ribosomal subunit. Forms a tight heterodimer with protein bS6.

Binds as a heterodimer with protein bS6 to the central domain of the 16S rRNA, where it helps stabilize the platform of the 30S subunit. In Klebsiella pneumoniae (strain 342), this protein is Small ribosomal subunit protein bS18.